We begin with the raw amino-acid sequence, 396 residues long: Elongation factor Tu (396 aa).

The tr-type G domain occupies 10 to 206 (KPHVNVGTIG…VLDTYIPEPE (197 aa)). The tract at residues 19-26 (GHVDHGKT) is G1. 19 to 26 (GHVDHGKT) contacts GTP. Thr-26 contributes to the Mg(2+) binding site. The G2 stretch occupies residues 60–64 (GITIN). A G3 region spans residues 81-84 (DCPG). Residues 81–85 (DCPGH) and 136–139 (NKCD) contribute to the GTP site. The segment at 136-139 (NKCD) is G4. The G5 stretch occupies residues 174–176 (SAT).

This sequence belongs to the TRAFAC class translation factor GTPase superfamily. Classic translation factor GTPase family. EF-Tu/EF-1A subfamily. Monomer.

The protein resides in the cytoplasm. The enzyme catalyses GTP + H2O = GDP + phosphate + H(+). Its function is as follows. GTP hydrolase that promotes the GTP-dependent binding of aminoacyl-tRNA to the A-site of ribosomes during protein biosynthesis. The chain is Elongation factor Tu from Psychrobacter arcticus (strain DSM 17307 / VKM B-2377 / 273-4).